A 446-amino-acid polypeptide reads, in one-letter code: Adenylosuccinate synthetase (446 aa).

GTP contacts are provided by residues G12–K18 and G40–T42. The Proton acceptor role is filled by D13. Residues D13 and G40 each contribute to the Mg(2+) site. Residues D13–K16, N38–H41, T128, R142, Q223, T238, and R302 contribute to the IMP site. The Proton donor role is filled by H41. T298–R304 serves as a coordination point for substrate. Residues R304, K330–D332, and S412–G414 contribute to the GTP site.

Belongs to the adenylosuccinate synthetase family. As to quaternary structure, homodimer. The cofactor is Mg(2+).

The protein resides in the cytoplasm. It carries out the reaction IMP + L-aspartate + GTP = N(6)-(1,2-dicarboxyethyl)-AMP + GDP + phosphate + 2 H(+). It participates in purine metabolism; AMP biosynthesis via de novo pathway; AMP from IMP: step 1/2. Its function is as follows. Plays an important role in the de novo pathway of purine nucleotide biosynthesis. Catalyzes the first committed step in the biosynthesis of AMP from IMP. This chain is Adenylosuccinate synthetase, found in Acaryochloris marina (strain MBIC 11017).